The primary structure comprises 311 residues: Methionyl-tRNA formyltransferase (311 aa).

110–113 lines the (6S)-5,6,7,8-tetrahydrofolate pocket; it reads SLLP.

Belongs to the Fmt family.

It catalyses the reaction L-methionyl-tRNA(fMet) + (6R)-10-formyltetrahydrofolate = N-formyl-L-methionyl-tRNA(fMet) + (6S)-5,6,7,8-tetrahydrofolate + H(+). Its function is as follows. Attaches a formyl group to the free amino group of methionyl-tRNA(fMet). The formyl group appears to play a dual role in the initiator identity of N-formylmethionyl-tRNA by promoting its recognition by IF2 and preventing the misappropriation of this tRNA by the elongation apparatus. In Acidobacterium capsulatum (strain ATCC 51196 / DSM 11244 / BCRC 80197 / JCM 7670 / NBRC 15755 / NCIMB 13165 / 161), this protein is Methionyl-tRNA formyltransferase.